The chain runs to 220 residues: Urease accessory protein UreG (220 aa).

18-25 is a GTP binding site; it reads GPVGSGKT.

It belongs to the SIMIBI class G3E GTPase family. UreG subfamily. In terms of assembly, homodimer. UreD, UreF and UreG form a complex that acts as a GTP-hydrolysis-dependent molecular chaperone, activating the urease apoprotein by helping to assemble the nickel containing metallocenter of UreC. The UreE protein probably delivers the nickel.

Its subcellular location is the cytoplasm. Its function is as follows. Facilitates the functional incorporation of the urease nickel metallocenter. This process requires GTP hydrolysis, probably effectuated by UreG. This Yersinia pestis protein is Urease accessory protein UreG.